Consider the following 395-residue polypeptide: Ribose-phosphate pyrophosphokinase 2, chloroplastic (395 aa).

The span at 1–23 (MASPAPRSLSSSSSSSSSSFCPS) shows a compositional bias: low complexity. The tract at residues 1–33 (MASPAPRSLSSSSSSSSSSFCPSISPPPRSPSR) is disordered. A chloroplast-targeting transit peptide spans 1–42 (MASPAPRSLSSSSSSSSSSFCPSISPPPRSPSRASLPFSVKC). Residues Asp-209, His-211, Asp-220, and Asp-224 each coordinate Mg(2+). The segment at 295–310 (GKVAVMLDDMIDTAGT) is binding of phosphoribosylpyrophosphate.

The protein belongs to the ribose-phosphate pyrophosphokinase family.

The protein localises to the plastid. It localises to the chloroplast. The catalysed reaction is D-ribose 5-phosphate + ATP = 5-phospho-alpha-D-ribose 1-diphosphate + AMP + H(+). This chain is Ribose-phosphate pyrophosphokinase 2, chloroplastic (PRS2), found in Spinacia oleracea (Spinach).